A 238-amino-acid chain; its full sequence is Orotidine 5'-phosphate decarboxylase (238 aa).

Residues aspartate 10, lysine 32, 59–68, threonine 122, arginine 184, glutamine 193, glycine 213, and arginine 214 each bind substrate; that span reads DLKLHDIPNT. The active-site Proton donor is the lysine 61.

Belongs to the OMP decarboxylase family. Type 1 subfamily. In terms of assembly, homodimer.

The enzyme catalyses orotidine 5'-phosphate + H(+) = UMP + CO2. It participates in pyrimidine metabolism; UMP biosynthesis via de novo pathway; UMP from orotate: step 2/2. Functionally, catalyzes the decarboxylation of orotidine 5'-monophosphate (OMP) to uridine 5'-monophosphate (UMP). The protein is Orotidine 5'-phosphate decarboxylase of Bacillus cytotoxicus (strain DSM 22905 / CIP 110041 / 391-98 / NVH 391-98).